The following is a 1171-amino-acid chain: Protein WWC2 (1171 aa).

WW domains lie at Leu9 to Asp42 and Asn56 to Lys89. Coiled coils occupy residues Lys120–Gln193, Glu223–Ala257, and Leu301–Thr420. Disordered regions lie at residues Ser521–Pro552 and Gln603–Asp637. Positions Pro534–Pro551 are enriched in low complexity. Basic and acidic residues-rich tracts occupy residues Ala606–Arg616 and Gly625–Asp637. A C2 domain is found at Gly684–Tyr806. Coiled-coil stretches lie at residues Leu836–Cys870 and Asp1047–Lys1123.

It belongs to the WWC family.

It localises to the cytoplasm. It is found in the cytosol. Negative regulator of the Hippo signaling pathway, also known as the Salvador-Warts-Hippo (SWH) pathway. This chain is Protein WWC2 (wwc2), found in Xenopus tropicalis (Western clawed frog).